Reading from the N-terminus, the 144-residue chain is Large ribosomal subunit protein uL15 (144 aa).

A disordered region spans residues 1–57 (MKLNDLSPAPGSRREKHRPGRGIGSGLGKTGGRGHKGQTSRSGGSIAPGFEGGQQPL). Residues 21-31 (RGIGSGLGKTG) show a composition bias toward gly residues.

It belongs to the universal ribosomal protein uL15 family. In terms of assembly, part of the 50S ribosomal subunit.

Its function is as follows. Binds to the 23S rRNA. The chain is Large ribosomal subunit protein uL15 from Pseudomonas putida (strain ATCC 700007 / DSM 6899 / JCM 31910 / BCRC 17059 / LMG 24140 / F1).